A 99-amino-acid chain; its full sequence is Putative septation protein SpoVG (99 aa).

Belongs to the SpoVG family.

Could be involved in septation. The chain is Putative septation protein SpoVG from Myxococcus xanthus (strain DK1622).